The chain runs to 174 residues: Ribosome maturation factor RimM (174 aa).

The PRC barrel domain occupies 97–171 (SDGEYYWCDL…RMTVSLPEGL (75 aa)).

It belongs to the RimM family. In terms of assembly, binds ribosomal protein uS19.

The protein localises to the cytoplasm. Functionally, an accessory protein needed during the final step in the assembly of 30S ribosomal subunit, possibly for assembly of the head region. Essential for efficient processing of 16S rRNA. May be needed both before and after RbfA during the maturation of 16S rRNA. It has affinity for free ribosomal 30S subunits but not for 70S ribosomes. This Geotalea daltonii (strain DSM 22248 / JCM 15807 / FRC-32) (Geobacter daltonii) protein is Ribosome maturation factor RimM.